A 261-amino-acid polypeptide reads, in one-letter code: Cytochrome c oxidase subunit 3 (261 aa).

Residues 1 to 15 lie on the Mitochondrial matrix side of the membrane; that stretch reads MTHQTHSYHMVNPSP. Residues 16 to 34 form a helical membrane-spanning segment; that stretch reads WPLTGALSALLMTSGLIMW. The Mitochondrial intermembrane portion of the chain corresponds to 35 to 40; that stretch reads FHFNSM. The helical transmembrane segment at 41–66 threads the bilayer; that stretch reads ILLTLGLSTNILTMYQWWRDIIREST. The Mitochondrial matrix segment spans residues 67 to 72; sequence FQGHHT. A helical transmembrane segment spans residues 73–105; it reads PTVQKGLRYGMILFIVSEVLFFTGFFWAFYHSS. At 106–128 the chain is on the mitochondrial intermembrane side; the sequence is LAPTPELGGCWPPTGIHPLNPLE. A helical transmembrane segment spans residues 129–152; that stretch reads VPLLNTSVLLASGVSITWAHHSLM. Residues 153 to 155 lie on the Mitochondrial matrix side of the membrane; it reads EGN. The helical transmembrane segment at 156–183 threads the bilayer; sequence RKHMLQALFITIALGLYFTLLQASEYYE. Over 184–190 the chain is Mitochondrial intermembrane; the sequence is APFTISD. A helical membrane pass occupies residues 191–223; sequence GIYGSTFFVATGFHGLHVIIGSTFLIVCFLRQV. Topologically, residues 224 to 232 are mitochondrial matrix; that stretch reads KFHFTSNHH. A helical membrane pass occupies residues 233–256; sequence FGFERAAWYWHFVDVVWLFLYVSI. At 257–261 the chain is on the mitochondrial intermembrane side; that stretch reads YWWGS.

It belongs to the cytochrome c oxidase subunit 3 family. In terms of assembly, component of the cytochrome c oxidase (complex IV, CIV), a multisubunit enzyme composed of 14 subunits. The complex is composed of a catalytic core of 3 subunits MT-CO1, MT-CO2 and MT-CO3, encoded in the mitochondrial DNA, and 11 supernumerary subunits COX4I, COX5A, COX5B, COX6A, COX6B, COX6C, COX7A, COX7B, COX7C, COX8 and NDUFA4, which are encoded in the nuclear genome. The complex exists as a monomer or a dimer and forms supercomplexes (SCs) in the inner mitochondrial membrane with NADH-ubiquinone oxidoreductase (complex I, CI) and ubiquinol-cytochrome c oxidoreductase (cytochrome b-c1 complex, complex III, CIII), resulting in different assemblies (supercomplex SCI(1)III(2)IV(1) and megacomplex MCI(2)III(2)IV(2)).

The protein localises to the mitochondrion inner membrane. The catalysed reaction is 4 Fe(II)-[cytochrome c] + O2 + 8 H(+)(in) = 4 Fe(III)-[cytochrome c] + 2 H2O + 4 H(+)(out). Functionally, component of the cytochrome c oxidase, the last enzyme in the mitochondrial electron transport chain which drives oxidative phosphorylation. The respiratory chain contains 3 multisubunit complexes succinate dehydrogenase (complex II, CII), ubiquinol-cytochrome c oxidoreductase (cytochrome b-c1 complex, complex III, CIII) and cytochrome c oxidase (complex IV, CIV), that cooperate to transfer electrons derived from NADH and succinate to molecular oxygen, creating an electrochemical gradient over the inner membrane that drives transmembrane transport and the ATP synthase. Cytochrome c oxidase is the component of the respiratory chain that catalyzes the reduction of oxygen to water. Electrons originating from reduced cytochrome c in the intermembrane space (IMS) are transferred via the dinuclear copper A center (CU(A)) of subunit 2 and heme A of subunit 1 to the active site in subunit 1, a binuclear center (BNC) formed by heme A3 and copper B (CU(B)). The BNC reduces molecular oxygen to 2 water molecules using 4 electrons from cytochrome c in the IMS and 4 protons from the mitochondrial matrix. In Balaenoptera musculus (Blue whale), this protein is Cytochrome c oxidase subunit 3 (MT-CO3).